The chain runs to 1157 residues: Hephaestin (1157 aa).

Positions 1 to 23 (MKAGHLLWALLLMHSLCSLPTDG) are cleaved as a signal peptide. 6 Plastocyanin-like domains span residues 24-206 (AIRN…LITC), 218-366 (QRKD…VDSC), 370-559 (PPVE…LLVC), 569-717 (KQKG…VSQC), 730-902 (ASRV…LVIC), and 910-1066 (NGGR…SHEE). The Extracellular segment spans residues 24–1109 (AIRNYYLGIQ…PVKNVEILSS (1086 aa)). Residues Asn49 and Asn54 are each glycosylated (N-linked (GlcNAc...) asparagine). Gly70 and Tyr73 together coordinate Na(+). The Cu(2+) site is built by His126 and His128. His126 lines the O2 pocket. 3 residues coordinate Ca(2+): Lys134, Asp152, and Asp153. N-linked (GlcNAc...) asparagine glycosylation occurs at Asn164. The cysteines at positions 180 and 206 are disulfide-linked. Residues His186 and His188 each contribute to the Cu(2+) site. Residue His186 participates in O2 binding. Residue Asn236 is glycosylated (N-linked (GlcNAc...) asparagine). Residue Ser265 participates in Na(+) binding. A disulfide bridge links Cys285 with Cys366. The Cu(2+) site is built by His304, Cys347, and His352. Na(+) is bound by residues Tyr416, Gly425, and Tyr428. The cysteines at positions 533 and 559 are disulfide-linked. Asn587 is a glycosylation site (N-linked (GlcNAc...) asparagine). Residue Ser616 coordinates Na(+). Cysteines 636 and 717 form a disulfide. The Cu(2+) site is built by His655, Cys698, His703, and Met708. 2 N-linked (GlcNAc...) asparagine glycosylation sites follow: Asn713 and Asn757. Positions 768 and 777 each coordinate Na(+). An intrachain disulfide couples Cys876 to Cys902. A glycan (N-linked (GlcNAc...) asparagine) is linked at Asn930. Residues His999, His1002, His1004, His1044, Cys1045, His1046, His1050, and Met1055 each coordinate Cu(2+). O2-binding residues include His1002 and His1004. His1046 provides a ligand contact to O2. A helical membrane pass occupies residues 1110-1130 (ALIAICVVLLLIALALGGVVW). Topologically, residues 1131–1157 (YQHRQRKLRRNRRSILDDSFKLLSLKQ) are cytoplasmic. Phosphoserine is present on residues Ser1144, Ser1149, and Ser1154.

The protein belongs to the multicopper oxidase family. In terms of assembly, part of a complex composed of SLC40A1/ferroportin, TF/transferrin and HEPH/hephaestin that transfers iron from cells to transferrin. Cu cation serves as cofactor. Highly expressed in small intestine and colon.

It is found in the basolateral cell membrane. The enzyme catalyses 4 Fe(2+) + O2 + 4 H(+) = 4 Fe(3+) + 2 H2O. Functionally, plasma membrane ferroxidase that mediates the extracellular conversion of ferrous/Fe(2+) iron into its ferric/Fe(3+) form. Couples ferroportin which specifically exports ferrous/Fe(2+) iron from cells to transferrin that only binds and shuttles extracellular ferric/Fe(3+) iron throughout the body. By helping iron transfer from cells to blood mainly contributes to dietary iron absorption by the intestinal epithelium and more generally regulates iron levels in the body. The protein is Hephaestin of Rattus norvegicus (Rat).